A 309-amino-acid chain; its full sequence is Porphobilinogen deaminase (309 aa).

C240 is modified (S-(dipyrrolylmethanemethyl)cysteine).

It belongs to the HMBS family. Monomer. Dipyrromethane is required as a cofactor.

The catalysed reaction is 4 porphobilinogen + H2O = hydroxymethylbilane + 4 NH4(+). It participates in porphyrin-containing compound metabolism; protoporphyrin-IX biosynthesis; coproporphyrinogen-III from 5-aminolevulinate: step 2/4. In terms of biological role, tetrapolymerization of the monopyrrole PBG into the hydroxymethylbilane pre-uroporphyrinogen in several discrete steps. The polypeptide is Porphobilinogen deaminase (Chromobacterium violaceum (strain ATCC 12472 / DSM 30191 / JCM 1249 / CCUG 213 / NBRC 12614 / NCIMB 9131 / NCTC 9757 / MK)).